We begin with the raw amino-acid sequence, 438 residues long: Cyclic 2,3-diphosphoglycerate synthetase (438 aa).

It belongs to the cyclic 2,3-diphosphoglycerate synthetase family.

It is found in the cytoplasm. It catalyses the reaction (2R)-2,3-bisphosphoglycerate + ATP + H(+) = cyclic (2R)-2,3-bisphosphoglycerate + ADP + phosphate. Catalyzes the formation of cyclic 2,3-diphosphoglycerate (cDPG) by formation of an intramolecular phosphoanhydride bond at the expense of ATP. The sequence is that of Cyclic 2,3-diphosphoglycerate synthetase from Thermococcus gammatolerans (strain DSM 15229 / JCM 11827 / EJ3).